We begin with the raw amino-acid sequence, 268 residues long: Taurine import ATP-binding protein TauB (268 aa).

The region spanning 4-236 (LAIRNISMRF…EGVDADLREV (233 aa)) is the ABC transporter domain. 41-48 (GPSGCGKT) provides a ligand contact to ATP.

Belongs to the ABC transporter superfamily. Taurine importer (TC 3.A.1.17.1) family. The complex is composed of two ATP-binding proteins (TauB), two transmembrane proteins (TauC) and a solute-binding protein (TauA).

It is found in the cell inner membrane. It carries out the reaction taurine(out) + ATP + H2O = taurine(in) + ADP + phosphate + H(+). Functionally, part of the ABC transporter complex TauABC involved in taurine import. Responsible for energy coupling to the transport system. This is Taurine import ATP-binding protein TauB from Jannaschia sp. (strain CCS1).